The primary structure comprises 172 residues: Ribosome maturation factor RimM (172 aa).

In terms of domain architecture, PRC barrel spans 96–168; the sequence is DGEFYYHEII…RIEVELMEGL (73 aa).

Belongs to the RimM family. Binds ribosomal protein uS19.

It localises to the cytoplasm. Its function is as follows. An accessory protein needed during the final step in the assembly of 30S ribosomal subunit, possibly for assembly of the head region. Essential for efficient processing of 16S rRNA. May be needed both before and after RbfA during the maturation of 16S rRNA. It has affinity for free ribosomal 30S subunits but not for 70S ribosomes. This Streptococcus thermophilus (strain CNRZ 1066) protein is Ribosome maturation factor RimM.